The chain runs to 408 residues: MIPGNRMLMVVLLCQVLLGGATDASLIPETGKKKVAEIQGHAGGRRSGQSHELLRDFEATLLQMFGLRRRPQPSKSAVIPDYMRDLYRLQSGEEEEEEQSQGTGLEYPERPASRANTVRSFHHEEHLENIPGTSESSAFRFFFNLSSIPENEVISSAELRLFREQVDQGPDWEQGFHRINIYEVMKPPAEMVPGHLITRLLDTRLVRHNVTRWETFDVSPAVLRWTREKQPNYGLAIEVTHLHQTRTHQGQHVRISRSLPQGSGNWAQLRPLLVTFGHDGRGHTLTRRRAKRSPKHHPQRSRKKNKNCRRHSLYVDFSDVGWNDWIVAPPGYQAFYCHGDCPFPLADHLNSTNHAIVQTLVNSVNSSIPKACCVPTELSAISMLYLDEYDKVVLKNYQEMVVEGCGCR.

The first 19 residues, 1–19, serve as a signal peptide directing secretion; that stretch reads MIPGNRMLMVVLLCQVLLG. Residues 20–292 constitute a propeptide that is removed on maturation; sequence GATDASLIPE…HTLTRRRAKR (273 aa). Position 91 is a phosphoserine (Ser-91). A disordered region spans residues 91 to 113; it reads SGEEEEEEQSQGTGLEYPERPAS. N-linked (GlcNAc...) asparagine glycosylation is found at Asn-144 and Asn-209. The tract at residues 281–307 is disordered; the sequence is RGHTLTRRRAKRSPKHHPQRSRKKNKN. Over residues 284-307 the composition is skewed to basic residues; sequence TLTRRRAKRSPKHHPQRSRKKNKN. 3 cysteine pairs are disulfide-bonded: Cys-308–Cys-373, Cys-337–Cys-405, and Cys-341–Cys-407. Residues Asn-350 and Asn-365 are each glycosylated (N-linked (GlcNAc...) asparagine).

This sequence belongs to the TGF-beta family. As to quaternary structure, homodimer; disulfide-linked. Interacts with GREM2. Part of a complex consisting of TWSG1 and CHRD. Interacts with the serine proteases, HTRA1 and HTRA3; the interaction with either inhibits BMP4-mediated signaling. The HTRA protease activity is required for this inhibition. Interacts with SOSTDC1. Interacts with FBN1 (via N-terminal domain) and FBN2. Interacts with type I receptor BMPR1A. Interacts with type II receptor BMPR2. Interacts with FSTL1; this interaction inhibits the activation of the BMP4/Smad1/5/8 signaling pathway. Interacts with SCUBE3. Interacts with TGFBR3.

It is found in the secreted. The protein localises to the extracellular space. The protein resides in the extracellular matrix. Its function is as follows. Growth factor of the TGF-beta superfamily that plays essential roles in many developmental processes, including neurogenesis, vascular development, angiogenesis and osteogenesis. Acts in concert with PTHLH/PTHRP to stimulate ductal outgrowth during embryonic mammary development and to inhibit hair follicle induction. Initiates the canonical BMP signaling cascade by associating with type I receptor BMPR1A and type II receptor BMPR2. Once all three components are bound together in a complex at the cell surface, BMPR2 phosphorylates and activates BMPR1A. In turn, BMPR1A propagates signal by phosphorylating SMAD1/5/8 that travel to the nucleus and act as activators and repressors of transcription of target genes. Positively regulates the expression of odontogenic development regulator MSX1 via inducing the IPO7-mediated import of SMAD1 to the nucleus. Required for MSX1-mediated mesenchymal molar tooth bud development beyond the bud stage, via promoting Wnt signaling. Acts as a positive regulator of odontoblast differentiation during mesenchymal tooth germ formation, expression is repressed during the bell stage by MSX1-mediated inhibition of CTNNB1 signaling. Able to induce its own expression in dental mesenchymal cells and also in the neighboring dental epithelial cells via an MSX1-mediated pathway. Can also signal through non-canonical BMP pathways such as ERK/MAP kinase, PI3K/Akt, or SRC cascades. For example, induces SRC phosphorylation which, in turn, activates VEGFR2, leading to an angiogenic response. The polypeptide is Bone morphogenetic protein 4 (Rattus norvegicus (Rat)).